The sequence spans 78 residues: Beta sliding clamp (78 aa).

Belongs to the beta sliding clamp family. As to quaternary structure, forms a ring-shaped head-to-tail homodimer around DNA which binds and tethers DNA polymerases and other proteins to the DNA. The DNA replisome complex has a single clamp-loading complex (3 tau and 1 each of delta, delta', psi and chi subunits) which binds 3 Pol III cores (1 core on the leading strand and 2 on the lagging strand) each with a beta sliding clamp dimer. Additional proteins in the replisome are other copies of gamma, psi and chi, Ssb, DNA helicase and RNA primase.

The protein resides in the cytoplasm. Confers DNA tethering and processivity to DNA polymerases and other proteins. Acts as a clamp, forming a ring around DNA (a reaction catalyzed by the clamp-loading complex) which diffuses in an ATP-independent manner freely and bidirectionally along dsDNA. Initially characterized for its ability to contact the catalytic subunit of DNA polymerase III (Pol III), a complex, multichain enzyme responsible for most of the replicative synthesis in bacteria; Pol III exhibits 3'-5' exonuclease proofreading activity. The beta chain is required for initiation of replication as well as for processivity of DNA replication. The polypeptide is Beta sliding clamp (dnaN) (Serratia marcescens).